We begin with the raw amino-acid sequence, 458 residues long: Phenylalanine-specific permease (458 aa).

Residues 1-27 (MKNASTVSEDTASNQEPTLHRGLHNRH) are Cytoplasmic-facing. The chain crosses the membrane as a helical span at residues 28-48 (IQLIALGGAIGTGLFLGIGPA). At 49 to 50 (IQ) the chain is on the periplasmic side. The helical transmembrane segment at 51–71 (MAGPAVLLGYGVAGIIAFLIM) threads the bilayer. The Cytoplasmic segment spans residues 72–105 (RQLGEMVVEEPVSGSFAHFAYKYWGPFAGFLSGW). Residues 106-126 (NYWVMFVLVGMAELTAAGIYM) form a helical membrane-spanning segment. The Periplasmic portion of the chain corresponds to 127-132 (QYWFPD). The helical transmembrane segment at 133–153 (VPTWIWAAAFFIIINAVNLVN) threads the bilayer. The Cytoplasmic portion of the chain corresponds to 154-160 (VRLYGET). A helical transmembrane segment spans residues 161-181 (EFWFALIKVLAIIGMIGFGLW). At 182–196 (LLFSGHGGEKASIDN) the chain is on the periplasmic side. The chain crosses the membrane as a helical span at residues 197-217 (LWRYGGFFATGWNGLILSLAV). The Cytoplasmic segment spans residues 218-250 (IMFSFGGLELIGITAAEARDPEKSIPKAVNQVV). The chain crosses the membrane as a helical span at residues 251-271 (YRILLFYIGSLVVLLALYPWV). Topologically, residues 272–288 (EVKSNSSPFVMIFHNLD) are periplasmic. The chain crosses the membrane as a helical span at residues 289 to 309 (SNVVASALNFVILVASLSVYN). Over 310–341 (SGVYSNSRMLFGLSVQGNAPKFLTRVSRRGVP) the chain is Cytoplasmic. Residues 342-362 (INSLMLSGAITSLVVLINYLL) traverse the membrane as a helical segment. Residues 363–367 (PQKAF) are Periplasmic-facing. Residues 368-388 (GLLMALVVATLLLNWIMICLA) form a helical membrane-spanning segment. Residues 389–411 (HLRFRAAMRRQGRETQFKALLYP) lie on the Cytoplasmic side of the membrane. The helical transmembrane segment at 412–432 (FGNYLCIAFLGMILLLMCTMD) threads the bilayer. At 433–434 (DM) the chain is on the periplasmic side. Residues 435 to 455 (RLSAILLPVWIVFLFMAFKTL) form a helical membrane-spanning segment. Over 456–458 (RRK) the chain is Cytoplasmic.

This sequence belongs to the amino acid-polyamine-organocation (APC) superfamily. Amino acid transporter (AAT) (TC 2.A.3.1) family.

It is found in the cell inner membrane. It carries out the reaction L-phenylalanine(in) + H(+)(in) = L-phenylalanine(out) + H(+)(out). Permease that is involved in the active transport across the cytoplasmic membrane of phenylalanine. Can also transport tyrosine, but not tryptophan. The sequence is that of Phenylalanine-specific permease from Escherichia coli (strain K12).